An 824-amino-acid chain; its full sequence is AMP deaminase 2 (824 aa).

Residues methionine 1–alanine 43 form a disordered region. Residues serine 10–alanine 20 show a composition bias toward basic residues. At arginine 44 the chain carries Omega-N-methylarginine. A phosphoserine mark is found at serine 45, serine 63, and serine 79. The residue at position 90 (tyrosine 90) is a Phosphotyrosine. A phosphoserine mark is found at serine 96 and serine 113. Position 133 is a phosphothreonine (threonine 133). Serine 135 and serine 137 each carry phosphoserine. Zn(2+)-binding residues include histidine 364 and histidine 366. Residues histidine 366 and lysine 435 to tyrosine 440 contribute to the substrate site. Histidine 633 contributes to the Zn(2+) binding site. Position 636 (glutamate 636) interacts with substrate. Residue histidine 655 is the Proton acceptor of the active site. Aspartate 710 serves as a coordination point for Zn(2+). A substrate-binding site is contributed by aspartate 711–glutamine 714.

The protein belongs to the metallo-dependent hydrolases superfamily. Adenosine and AMP deaminases family. In terms of assembly, homotetramer. It depends on Zn(2+) as a cofactor.

It carries out the reaction AMP + H2O + H(+) = IMP + NH4(+). The protein operates within purine metabolism; IMP biosynthesis via salvage pathway; IMP from AMP: step 1/1. Its function is as follows. AMP deaminase plays a critical role in energy metabolism. Catalyzes the deamination of AMP to IMP and plays an important role in the purine nucleotide cycle. In Mus musculus (Mouse), this protein is AMP deaminase 2.